The sequence spans 808 residues: Sucrose synthase 4 (808 aa).

The interval 277–754 (MVFNVVILSP…GLERIQEKYT (478 aa)) is GT-B glycosyltransferase.

This sequence belongs to the glycosyltransferase 1 family. Plant sucrose synthase subfamily. In terms of tissue distribution, detected in the whole plant with highest expression in young rosette leaves and roots.

It catalyses the reaction an NDP-alpha-D-glucose + D-fructose = a ribonucleoside 5'-diphosphate + sucrose + H(+). In terms of biological role, sucrose-cleaving enzyme that provides UDP-glucose and fructose for various metabolic pathways. In Arabidopsis thaliana (Mouse-ear cress), this protein is Sucrose synthase 4 (SUS4).